A 974-amino-acid polypeptide reads, in one-letter code: Villin-4 (974 aa).

Gelsolin-like repeat units follow at residues 29–79 (FIPT…DEAG), 150–190 (VHVK…QERA), 262–305 (GQAN…DDRK), 394–451 (LQVW…EERG), 532–572 (MQAI…TDQE), and 634–675 (LKVT…KNKL). The tract at residues 738 to 783 (VKNGGTPVADKPKRRTPASYGGRASVPDKSQQRSRSMSFSPDRVRV) is disordered. 2 positions are modified to phosphoserine: Ser777 and Ser787. 2 disordered regions span residues 801 to 833 (NARN…APKS) and 845 to 930 (KIPP…PVSD). A compositionally biased stretch (low complexity) spans 824-833 (SSKFAPAPKS). The segment covering 872 to 887 (NSKEQEEKKENDKEEG) has biased composition (basic and acidic residues). Positions 888-898 (SMSSRIESLTI) are enriched in polar residues. Ser890 is subject to Phosphoserine. Positions 909-974 (EEDLPAHPYD…NKFKMAVQLF (66 aa)) constitute an HP domain. Residues 912-921 (LPAHPYDRLK) are compositionally biased toward basic and acidic residues.

Belongs to the villin/gelsolin family. Preferentially expressed in vegetative tissues. Detected in the whole seedling, hypocotyl, cotyledon, primary root, roots hair cells and trichomes. Expressed in flowers but not in the silique.

The protein resides in the cytoplasm. It localises to the cytoskeleton. Functionally, binds actin and actin filament bundles in a Ca(2+)-insensitive manner, but caps the barbed end of actin filaments and is able to sever them in a calcium-dependent manner. Involved in root hair growth through regulating actin organization in a Ca(2+)-dependent manner. In Arabidopsis thaliana (Mouse-ear cress), this protein is Villin-4.